Consider the following 269-residue polypeptide: Interleukin-1 beta (269 aa).

Positions 1–117 (MATVPELNCE…DDDDNLLVCD (117 aa)) are excised as a propeptide.

The protein belongs to the IL-1 family. As to quaternary structure, monomer. Interacts with MEFV. Interacts with integrins ITGAV:ITGBV and ITGA5:ITGB1; integrin-binding is required for IL1B signaling. Interacts with cargo receptor TMED10; the interaction is direct and is required for the secretion of IL1B mature form. Interacts with HSP90AB1; the interaction facilitates cargo translocation into the ERGIC. Interacts with HSP90B1; the interaction facilitates cargo translocation into the ERGIC. In terms of tissue distribution, expressed in activated macrophages (at protein level).

It localises to the cytoplasm. Its subcellular location is the cytosol. The protein resides in the secreted. The protein localises to the lysosome. It is found in the extracellular exosome. Functionally, potent pro-inflammatory cytokine. Initially discovered as the major endogenous pyrogen, induces prostaglandin synthesis, neutrophil influx and activation, T-cell activation and cytokine production, B-cell activation and antibody production, and fibroblast proliferation and collagen production. Promotes Th17 differentiation of T-cells. Synergizes with IL12/interleukin-12 to induce IFNG synthesis from T-helper 1 (Th1) cells. Plays a role in angiogenesis by inducing VEGF production synergistically with TNF and IL6. Involved in transduction of inflammation downstream of pyroptosis: its mature form is specifically released in the extracellular milieu by passing through the gasdermin-D (GSDMD) pore. The polypeptide is Interleukin-1 beta (Il1b) (Mus musculus (Mouse)).